We begin with the raw amino-acid sequence, 109 residues long: Putative transporter-like protein YIL171W (109 aa).

Positions 1–22 are enriched in polar residues; the sequence is MSGVNNTSANDLSTTESNSNSA. Residues 1–40 form a disordered region; the sequence is MSGVNNTSANDLSTTESNSNSAVGAPSVKTEHGDSKDSLN. Residues 1–56 lie on the Cytoplasmic side of the membrane; that stretch reads MSGVNNTSANDLSTTESNSNSAVGAPSVKTEHGDSKDSLNLDATEAPIDLPQKPLS. The segment covering 29 to 39 has biased composition (basic and acidic residues); it reads KTEHGDSKDSL. A helical membrane pass occupies residues 57-77; the sequence is AYTTVAILCLMIAFGGFIFGW. At 78-109 the chain is on the extracellular side; the sequence is DTGTISGFVNLSDFIRRFGQKKTTRGLTTYRK. Asn87 carries N-linked (GlcNAc...) asparagine glycosylation.

Belongs to the major facilitator superfamily. Sugar transporter (TC 2.A.1.1) family.

The protein localises to the cell membrane. Functionally, probable glucose transporter. This is Putative transporter-like protein YIL171W from Saccharomyces cerevisiae (strain ATCC 204508 / S288c) (Baker's yeast).